A 402-amino-acid polypeptide reads, in one-letter code: Large ribosomal subunit protein uL3 (402 aa).

The disordered stretch occupies residues methionine 1–aspartate 35. The segment covering proline 18–alanine 31 has biased composition (basic residues).

Belongs to the universal ribosomal protein uL3 family.

It is found in the cytoplasm. The L3 protein is a component of the large subunit of cytoplasmic ribosomes. The protein is Large ribosomal subunit protein uL3 (RPL3) of Toxocara canis (Canine roundworm).